The chain runs to 514 residues: MELIVIIITLAFCILLYGTRWRAALDPREPRLISPTVPLIGHILGIATDGFGYFSKLNDKYGLPAFSLQMPLSRLYVITSSELVPAIQRQSQNIRFDTFEFTLAAERVGGVSGPGLKLLKGSIVDELQHAMHHALIGHGLDAMNLSMIEAIKPSIDELQSQKQAAFDLFAWCKRSITMASTDSVYGPMNPFRSIEVERAFWDFASNMNMIILNVLPFLTARKSLDDRRKVVDALTEYYNLGGHENSSEMTYGRWEVQYNKGITTQDIARMEIVNAIGVLSNTAPSTFWTLFEIYSRPSLLRDLRQELVASAVYTHPGTDGGIVRTIDLSAVRAKCSLLLGTFQEVLRMRSNAIVTRMVHEDTILNERVLFKKGSVIVIPARCVNREKSVWGETGDSFDAYRYLGQGKSGTSRSGRNVTRVAFQSFGTAPNICPGRHFASGEILAVVAMVILRFDMEPVLGEWIPPKANVKTLASSIQTPAGEFMVTLRERKEFKDDKWDFRVTEGDSKFPLLVG.

The chain crosses the membrane as a helical span at residues 2-24 (ELIVIIITLAFCILLYGTRWRAA). Asn-144, Asn-245, and Asn-416 each carry an N-linked (GlcNAc...) asparagine glycan. Cys-432 provides a ligand contact to heme.

Belongs to the cytochrome P450 family. Heme serves as cofactor.

It localises to the membrane. It participates in secondary metabolite biosynthesis. Its function is as follows. Cytochrome P450 monooxygenase; part of the gene cluster that mediates the biosynthesis of the indole diterpenes nodulisporic acids (NA). Nodulisporic acid A (NAA) and its chemically modified derivatives are of particular significance because of their highly potent insecticidal activity against blood-feeding arthropods and lack of observable adverse effects on mammals, in particular the tremogenicity associated with the paspaline-derived IDTs is not observed. The geranylgeranyl diphosphate (GGPP) synthase ggs1, localized outside of the cluster, is proposed to catalyze the first step in nodulisporic acid biosynthesis via conversion of farnesyl pyrophosphate and isopentyl pyrophosphate into geranylgeranyl pyrophosphate (GGPP). Condensation of indole-3-glycerol phosphate with GGPP by the prenyl transferase nodC then forms 3-geranylgeranylindole (3-GGI). Epoxidation by the FAD-dependent monooxygenase nodM leads to a single-epoxidized-GGI that is substrate of the terpene cyclase nodB for cyclization to yield emindole SB. The terminal methyl carbon, C28, of emindole SB is then oxidized by the cytochrome P450 monooxygenase nodW to produce nodulisporic acid F (NAF), the pentacyclic core of NAA. NAF is converted to nodulisporic acid E (NAE) via prenylation. This step is probably performed by one of the indole diterpene prenyltransferases nodD1 or nodD2. Several oxidation steps performed by the FAD-linked oxidoreductase nodO and one of the cytochrome P450 monooxygenase nodR, nodX or nodZ further convert NAE to nodulisporic acid D (NAD). NAD is substrate of cytochrome P450 monooxygenase nodJ to produce the precursor of nodulisporic acid C (NAC), converted to NAC by one of the indole diterpene prenyltransferases nodD1 or nodD2. The FAD-dependent monooxygenase nodY2 then oxidizes NAC to nodulisporic acid B (NAB). Finally NAB is converted to NAA by one of the cytochrome P450 monooxygenases nodR, nodX or nodZ. The protein is Cytochrome P450 monooxygenase nodJ of Hypoxylon pulicicidum.